Reading from the N-terminus, the 742-residue chain is Envelope glycoprotein H (742 aa).

The N-terminal stretch at 1–29 (MRPGLPSYLIVLAVCLLSHLLSSRYGAEA) is a signal peptide. Residues 30–719 (ISEPLDKAFH…VVDATDSRLL (690 aa)) lie on the Virion surface side of the membrane. N55, N62, N67, and N192 each carry an N-linked (GlcNAc...) asparagine; by host glycan. The interaction with gL stretch occupies residues 217 to 280 (YLIDELRYVK…QTEKHELLVL (64 aa)). N-linked (GlcNAc...) asparagine; by host glycans are attached at residues N641 and N700. The helical transmembrane segment at 720–740 (MMSVYALSAIIGIYLLYRMLK) threads the bilayer. Topologically, residues 741 to 742 (TC) are intravirion.

The protein belongs to the herpesviridae glycoprotein H family. In terms of assembly, interacts with glycoprotein L (gL); this interaction is necessary for the correct processing and cell surface expression of gH. The heterodimer gH/gL seems to interact with gB trimers during fusion. Forms the envelope pentamer complex (PC) composed of gH, gL, UL128, UL130, and UL131A. The pentamer interacts with host NRP2. Forms the envelope trimer complex composed of gH, gL, and gO. The trimer interacts with host PDGFRA. The trimer also interacts with host EPHA2. Post-translationally, N-glycosylated, O-glycosylated, and sialylated.

It is found in the virion membrane. The protein localises to the host cell membrane. The protein resides in the host endosome membrane. Functionally, the heterodimer glycoprotein H-glycoprotein L is required for the fusion of viral and plasma membranes leading to virus entry into the host cell. Following initial binding to host receptor, membrane fusion is mediated by the fusion machinery composed of gB and the heterodimer gH/gL. May also be involved in the fusion between the virion envelope and the outer nuclear membrane during virion morphogenesis. In human cytomegalovirus, forms two distincts complexes to mediate viral entry, a trimer and a pentamer at the surface of the virion envelope. The gH-gL-gO trimer is required for infection in fibroblasts by interacting with host PDGFRA, and in glioblastoma cells by interacting with host EPHA2. The gH-gL-UL128-UL130-UL131A pentamer is essential for viral entry in epithelial, endothelial and myeloid cells via interaction with host NRP2. The polypeptide is Envelope glycoprotein H (Human cytomegalovirus (strain Towne) (HHV-5)).